Here is a 647-residue protein sequence, read N- to C-terminus: LIM domain kinase 1 (647 aa).

LIM zinc-binding domains are found at residues C25 to D75 and C84 to C137. The 94-residue stretch at L165–P258 folds into the PDZ domain. A Phosphoserine modification is found at S210. T229 bears the Phosphothreonine mark. Residues H256 to G319 are disordered. Residues P266 to V277 are compositionally biased toward low complexity. Polar residues-rich tracts occupy residues H278–R289 and S298–S313. Phosphoserine is present on residues S298, S302, S307, and S310. Phosphoserine; by MAPKAPK2 is present on S323. S337 carries the post-translational modification Phosphoserine. Residues L339–L604 form the Protein kinase domain. ATP is bound by residues L345 to A353 and K368. Residue D460 is part of the active site. T508 carries the phosphothreonine; by ROCK1 modification.

This sequence belongs to the protein kinase superfamily. TKL Ser/Thr protein kinase family. In terms of assembly, self-associates to form homodimers. Interacts with HSP90AA1; this interaction promotes LIMK1 dimerization and subsequent transphosphorylation. Interacts with CDKN1C. Interacts (via LIM domain) with the cytoplasmic domain of NRG1. Interacts with NISCH. Interacts with SSH1. Interacts with RLIM and RNF6. Interacts (via LIM zinc-binding domains) with FAM89B/LRAP25 (via LRR repeat). Forms a tripartite complex with CDC42BPA, CDC42BPB and FAM89B/LRAP25. In terms of processing, autophosphorylated. Phosphorylated on Thr-508 by ROCK1 and PAK1, resulting in activation. Phosphorylated by PAK4 which increases the ability of LIMK1 to phosphorylate cofilin. Phosphorylated at Ser-323 by MAPKAPK2 during activation of VEGFA-induced signaling, which results in activation of LIMK1 and promotion of actin reorganization, cell migration, and tubule formation of endothelial cells. Dephosphorylated and inactivated by SSH1. Phosphorylated by CDC42BP. Post-translationally, ubiquitinated. 'Lys-48'-linked polyubiquitination by RNF6 leads to proteasomal degradation through the 26S proteasome, modulating LIMK1 levels in the growth cone and its effect on axonal outgrowth. Also polyubiquitinated by RLIM. In terms of tissue distribution, highest expression in the nervous system, particularly in the spinal cord and the cranial nerve and dorsal root ganglia.

The protein localises to the cytoplasm. It is found in the nucleus. Its subcellular location is the cytoskeleton. The protein resides in the cell projection. It localises to the lamellipodium. The catalysed reaction is L-seryl-[protein] + ATP = O-phospho-L-seryl-[protein] + ADP + H(+). The enzyme catalyses L-threonyl-[protein] + ATP = O-phospho-L-threonyl-[protein] + ADP + H(+). Its function is as follows. Serine/threonine-protein kinase that plays an essential role in the regulation of actin filament dynamics. Acts downstream of several Rho family GTPase signal transduction pathways. Activated by upstream kinases including ROCK1, PAK1 and PAK4, which phosphorylate LIMK1 on a threonine residue located in its activation loop. LIMK1 subsequently phosphorylates and inactivates the actin binding/depolymerizing factors cofilin-1/CFL1, cofilin-2/CFL2 and destrin/DSTN, thereby preventing the cleavage of filamentous actin (F-actin), and stabilizing the actin cytoskeleton. In this way LIMK1 regulates several actin-dependent biological processes including cell motility, cell cycle progression, and differentiation. Phosphorylates TPPP on serine residues, thereby promoting microtubule disassembly. Stimulates axonal outgrowth and may be involved in brain development. The sequence is that of LIM domain kinase 1 (Limk1) from Mus musculus (Mouse).